Consider the following 488-residue polypeptide: 3-octaprenyl-4-hydroxybenzoate carboxy-lyase (488 aa).

Asn-172 provides a ligand contact to Mn(2+). Prenylated FMN is bound by residues 175–177 (IYR), 189–191 (RWL), and 194–195 (RG). Glu-238 lines the Mn(2+) pocket. The active-site Proton donor is the Asp-287.

The protein belongs to the UbiD family. As to quaternary structure, homohexamer. It depends on prenylated FMN as a cofactor. Requires Mn(2+) as cofactor.

It is found in the cell membrane. It catalyses the reaction a 4-hydroxy-3-(all-trans-polyprenyl)benzoate + H(+) = a 2-(all-trans-polyprenyl)phenol + CO2. The protein operates within cofactor biosynthesis; ubiquinone biosynthesis. Functionally, catalyzes the decarboxylation of 3-octaprenyl-4-hydroxy benzoate to 2-octaprenylphenol, an intermediate step in ubiquinone biosynthesis. In Pseudomonas putida (strain GB-1), this protein is 3-octaprenyl-4-hydroxybenzoate carboxy-lyase.